A 1024-amino-acid polypeptide reads, in one-letter code: MAQGAMRFCSEGDCAISPPRCPRRWLPEGPVPQSPPASMYGSTGSLIRRVVGPGPRGRDLGRVTAPCTPLRAPPSPHIAPSPWGPSSPTGQPPPGAQSSVVIFRFVEKASVRPLNGLPASGGLSRSWDLGGISAPRPTPALGPGCNRKLRLEASTSDPLPAGGGSVLPGSRDPSRGPLVPPQIGADGLYSSLPNGLGGTPEHLAMHFRGPADTGFLNQGDTWSSPREVSSHAQRIARAKWEFFYGSLDAPSSGAKPPEQVLPSRGVGSKQGSGVAVGRAAKYSETDLDKVPLRCYRETDIDEVLAEREEADSAIESQPSSEGPHGTAQPPASRPSPCPGPSSSLGSGNEDDEAGGEEDVDDEVFEASEGARPGDHMPHSGLLKSPVPFLLGTSPSADGPDSFSCVFEAILESHRAKGTSYSSLASLEALASPGPTQSPFFTFEMPPQPPAPRPDPPAPAPLAPLEPDSGTSSAADGPWTQRREVEESDAGATLAPRKELPSPSHSEDSFGLGAAPLGSEPPLSQLVSDSDSELDSTERLALGSTDTLSNGQKADLEAAQRLAKRLYRLDGFRKADVARHLGKNNDFSKLVAGEYLKFFVFTGMTLDQALRVFLKELALMGETQERERVLAHFSQRYFQCNPEALSSEDGAHTLTCALMLLNTDLHGHNIGKRMTCGDFIGNLEGLNDGGDFPRELLKALYSSIKNEKLQWAIDEEELRRSLSELADPNPKVIKRVSGGSGSSSSPFLDLTPEPGAAVYKHGALVRKVHADPDCRKTPRGKRGWKSFHGILKGMILYLQKEEYQPGKALSEAELKNAISIHHALATRASDYSKRPHVFYLRTADWRVFLFQAPSLEQMQSWITRINVVAAMFSAPPFPAAVSSQKKFSRPLLPSAATRLSQEEQVRTHEAKLKAMASELREHRAAHLGKKARGKEADEQRQKEAYLEFEKSRYGTYAALLRVKMKAASEELDTIEAALAQAGSTEDGCPPPHSSPSLRPKPTSQPRAQRPGSETRAGAGSTRPKP.

The tract at residues 67–96 (CTPLRAPPSPHIAPSPWGPSSPTGQPPPGA) is disordered. Residues 71-95 (RAPPSPHIAPSPWGPSSPTGQPPPG) show a composition bias toward pro residues. Phosphoserine occurs at positions 126 and 156. 4 disordered regions span residues 154 to 195 (STSD…LPNG), 250 to 277 (PSSGAKPPEQVLPSRGVGSKQGSGVAVG), 307 to 401 (REEA…GPDS), and 434 to 536 (PTQS…LDST). The segment covering 348–365 (NEDDEAGGEEDVDDEVFE) has biased composition (acidic residues). Positions 445–463 (PPQPPAPRPDPPAPAPLAP) are enriched in pro residues. The segment covering 495–507 (PRKELPSPSHSED) has biased composition (basic and acidic residues). One can recognise an SEC7 domain in the interval 512–706 (GAAPLGSEPP…KALYSSIKNE (195 aa)). A Phosphoserine modification is found at S720. The PH domain maps to 756 to 869 (AVYKHGALVR…WITRINVVAA (114 aa)). Coiled-coil stretches lie at residues 898 to 924 (LSQEEQVRTHEAKLKAMASELREHRAA) and 956 to 983 (AALLRVKMKAASEELDTIEAALAQAGST). Residues 976–1024 (ALAQAGSTEDGCPPPHSSPSLRPKPTSQPRAQRPGSETRAGAGSTRPKP) form a disordered region.

This sequence belongs to the PSD family. As to quaternary structure, interacts with ACTN1. Interacts (ARF6-bound form) with KCNK1; does not interact with KCNK1 in the absence of ARF6. As to expression, highest expression detected in brain and some expression detected also in uterus, stomach, ovary and intestine, with isoform 2 being expressed at the highest levels. In the brain, isoform 1 is highly expressed in the strata oriens, radiatum, lacunosum-moleculare of the hippocampal CA1-3 regions and the dentate molecular layer of the hippocampal formation, with lower levels detected in the neuronal cell layers and the stratum lucidum (at protein level). Not detected in tongue, thymus, spleen, lung, heart, liver and kidney.

It localises to the cell membrane. Its subcellular location is the cell projection. The protein localises to the ruffle. It is found in the ruffle membrane. The protein resides in the cleavage furrow. Functionally, guanine nucleotide exchange factor for ARF6. Isoform 2 and isoform 3 induce cytoskeletal remodeling, but lead to distinct morphological changes in HeLa cells: isoform 2 induces cell elongation and formation of actin-rich protrusions, whereas isoform 3 promotes the formation of membrane ruffles and loss of stress fibers. The polypeptide is PH and SEC7 domain-containing protein 1 (Psd) (Mus musculus (Mouse)).